The primary structure comprises 161 residues: Large ribosomal subunit protein uL15 (161 aa).

Residues 1–43 (MKLSEISDNPGARKKRMRIGRGIGSGKGKTGGRGGKGQTARSG) form a disordered region. The segment covering 21–37 (RGIGSGKGKTGGRGGKG) has biased composition (gly residues).

The protein belongs to the universal ribosomal protein uL15 family. As to quaternary structure, part of the 50S ribosomal subunit.

Binds to the 23S rRNA. The sequence is that of Large ribosomal subunit protein uL15 from Rhodopseudomonas palustris (strain HaA2).